A 500-amino-acid polypeptide reads, in one-letter code: Probable malate:quinone oxidoreductase (500 aa).

The protein belongs to the MQO family. FAD serves as cofactor.

It catalyses the reaction (S)-malate + a quinone = a quinol + oxaloacetate. It participates in carbohydrate metabolism; tricarboxylic acid cycle; oxaloacetate from (S)-malate (quinone route): step 1/1. The polypeptide is Probable malate:quinone oxidoreductase (Bacillus thuringiensis (strain Al Hakam)).